We begin with the raw amino-acid sequence, 278 residues long: Aquaporin NIP3-3 (278 aa).

The next 2 helical transmembrane spans lie at 70 to 90 and 99 to 119; these read VSAE…TIIM and TLLG…LSLI. The NPA 1 motif lies at 127–129; the sequence is NPA. 3 consecutive transmembrane segments (helical) span residues 141–163, 185–205, and 213–233; these read PSAH…SFAV, AFFV…ALAT, and LIAV…GPST. The NPA 2 motif lies at 238–240; it reads NPA. A helical transmembrane segment spans residues 255–275; the sequence is IWVYLVATPLGAIAGTGAYVA.

Belongs to the MIP/aquaporin (TC 1.A.8) family. NIP (TC 1.A.8.12) subfamily. As to expression, expressed in leaves and at lower levels in roots and anthers.

It localises to the membrane. Aquaporins facilitate the transport of water and small neutral solutes across cell membranes. The protein is Aquaporin NIP3-3 (NIP3-3) of Oryza sativa subsp. japonica (Rice).